Reading from the N-terminus, the 148-residue chain is Receptor activity-modifying protein 1 (148 aa).

The signal sequence occupies residues 1-26 (MAPGLRGLPRRGLWLLLAHHLFMVTA). 3 disulfides stabilise this stretch: Cys-27–Cys-82, Cys-40–Cys-72, and Cys-57–Cys-104. Residues 27-118 (CRDPDYGTLI…RALRDPPNSI (92 aa)) lie on the Extracellular side of the membrane. A helical membrane pass occupies residues 119–140 (LCPFIVLPITVTLLMTALVVWR). Over 141–148 (SKRTEGIV) the chain is Cytoplasmic.

The protein belongs to the RAMP family. Heterodimer of CALCRL and RAMP1; the interaction induces allosteric modulation of CALCRL function and CGRP1/CALCA and CGRP2/CALCB ligand specificity. Heterodimer of CALCR and RAMP1; interaction forms the AMYR1 receptor complex for amylin/IAPP and CGRP1/CALCA ligands.

The protein resides in the cell membrane. Its function is as follows. Accessory protein that interacts with and modulates the function of G-protein coupled receptors including calcitonin gene-related peptide type 1 receptor (CALCRL) and calcitonin receptor (CALCR). Required for the transport of CALCRL to the plasma membrane. Together with CALCRL, form the receptor complex for the calcitonin gene-related peptides CGRP1/CALCA and CGRP2/CALCB. Together with CALCR, form the AMYR1 receptor complex for amylin/IAPP and CGRP1/CALCA. The sequence is that of Receptor activity-modifying protein 1 from Rattus norvegicus (Rat).